A 295-amino-acid polypeptide reads, in one-letter code: 4-hydroxy-tetrahydrodipicolinate synthase (295 aa).

T48 is a pyruvate binding site. Y136 (proton donor/acceptor) is an active-site residue. The active-site Schiff-base intermediate with substrate is K164. I206 is a pyruvate binding site.

Belongs to the DapA family. Homotetramer; dimer of dimers.

It is found in the cytoplasm. The catalysed reaction is L-aspartate 4-semialdehyde + pyruvate = (2S,4S)-4-hydroxy-2,3,4,5-tetrahydrodipicolinate + H2O + H(+). It participates in amino-acid biosynthesis; L-lysine biosynthesis via DAP pathway; (S)-tetrahydrodipicolinate from L-aspartate: step 3/4. Functionally, catalyzes the condensation of (S)-aspartate-beta-semialdehyde [(S)-ASA] and pyruvate to 4-hydroxy-tetrahydrodipicolinate (HTPA). This Actinobacillus pleuropneumoniae serotype 5b (strain L20) protein is 4-hydroxy-tetrahydrodipicolinate synthase.